The primary structure comprises 414 residues: MSILQIGAGGVGWVVAHKAAQNNDVLGDITIASRSIAKCEKIIESIKGKNNLKDSSKKLEARQVNADDIESLVKLINEVKPDLVINAGPPWVNVAIMEACYQAKVSYLDTSVSVDLCSKGQQVPEAYDAQWAFRDKFKQAGITAILSAGFDPGVVSVFAAYAAKYLFDEIDTIDVLDINAGDHGKKFATNFDPETNLLEIQGDSIYWDAGEWKRVPCHTRMLEFDFPKCGKFKVYSMSHDELRSLKEFIPAKRIEFWMGFGDRYLNYFNMMRDIGLLSPEPLTLQDGTVVKPLQVLKAMLPDPTSLAPGYKGLTCIGTWVQGKKDGKARSVFIYNHADHEVAYHDVEHQAIAYTTGVPAITAALQFFRGEWAEPGVFNMEQLNPDPFLETMPSIGLGWDVMELEPGQPDIQVVK.

It belongs to the saccharopine dehydrogenase family. Carboxynorspermidine synthase subfamily.

It catalyses the reaction carboxynorspermidine + NADP(+) + H2O = L-aspartate 4-semialdehyde + propane-1,3-diamine + NADPH + H(+). The enzyme catalyses carboxyspermidine + NADP(+) + H2O = L-aspartate 4-semialdehyde + putrescine + NADPH + H(+). In terms of biological role, involved in norspermidine biosynthesis. Catalyzes the synthesis of carboxynorspermidine from L-aspartate 4-semialdehyde and 1,3-diaminopropane. Is also active with putrescine as a substrate. Essential for biofilm formation. The protein is Carboxynorspermidine synthase of Vibrio cholerae serotype O1 (strain ATCC 39315 / El Tor Inaba N16961).